Reading from the N-terminus, the 71-residue chain is Exodeoxyribonuclease 7 small subunit (71 aa).

It belongs to the XseB family. As to quaternary structure, heterooligomer composed of large and small subunits.

Its subcellular location is the cytoplasm. The enzyme catalyses Exonucleolytic cleavage in either 5'- to 3'- or 3'- to 5'-direction to yield nucleoside 5'-phosphates.. Functionally, bidirectionally degrades single-stranded DNA into large acid-insoluble oligonucleotides, which are then degraded further into small acid-soluble oligonucleotides. This Clostridium botulinum (strain Kyoto / Type A2) protein is Exodeoxyribonuclease 7 small subunit.